A 758-amino-acid polypeptide reads, in one-letter code: Actin filament-associated protein 1-like 1 (758 aa).

The interval 91–194 (YRDSSENLSC…YESYDEEDEE (104 aa)) is disordered. A compositionally biased stretch (pro residues) spans 102–120 (LPPPPSAPPPPLPTTPPPE). Polar residues predominate over residues 137 to 148 (YITSRNSSSPPN). The span at 177–186 (ESDGLSSSYE) shows a compositional bias: low complexity. The PH 1 domain maps to 216–312 (DSRICAFLLR…WLRVIKEVIS (97 aa)). The segment at 335-369 (SHDKTSDSDSAANGENSSLSSGKENRDTGKCRKGG) is disordered. Polar residues predominate over residues 342-356 (SDSAANGENSSLSSG). Positions 409 to 503 (EVPCCGYLSV…WLGLLLAQTG (95 aa)) constitute a PH 2 domain. The stretch at 602–690 (KTRAEEDARK…TEVKENLKKS (89 aa)) forms a coiled coil. The segment at 692–758 (AGGPTLGLAV…KAKEWEKKKP (67 aa)) is disordered. A compositionally biased stretch (basic and acidic residues) spans 749–758 (KAKEWEKKKP).

It is found in the cytoplasm. Its subcellular location is the cell projection. It localises to the podosome. The protein resides in the invadopodium. The protein localises to the cytoskeleton. It is found in the stress fiber. In terms of biological role, may be involved in podosome and invadosome formation. This Xenopus tropicalis (Western clawed frog) protein is Actin filament-associated protein 1-like 1 (afap1l1).